Here is a 182-residue protein sequence, read N- to C-terminus: ATP-dependent protease subunit HslV (182 aa).

T6 is a catalytic residue. Na(+) is bound by residues A164, C167, and T170.

The protein belongs to the peptidase T1B family. HslV subfamily. A double ring-shaped homohexamer of HslV is capped on each side by a ring-shaped HslU homohexamer. The assembly of the HslU/HslV complex is dependent on binding of ATP.

The protein resides in the cytoplasm. It carries out the reaction ATP-dependent cleavage of peptide bonds with broad specificity.. Allosterically activated by HslU binding. Its function is as follows. Protease subunit of a proteasome-like degradation complex believed to be a general protein degrading machinery. This is ATP-dependent protease subunit HslV from Borreliella afzelii (strain PKo) (Borrelia afzelii).